Reading from the N-terminus, the 177-residue chain is Small ribosomal subunit protein eS10z (177 aa).

The tract at residues 90–177 (TLKKSAKPGG…AAAPSGSGFP (88 aa)) is disordered. Over residues 108–140 (DRQRGPPRSDGDRPRFGDRDGYRGGPRGGDEKG) the composition is skewed to basic and acidic residues. The segment covering 141-150 (GAPADFQPSF) has biased composition (low complexity). A compositionally biased stretch (gly residues) spans 151 to 165 (QGGGGRPGFGRGAGG). Over residues 166-177 (YSAAAPSGSGFP) the composition is skewed to low complexity.

It belongs to the eukaryotic ribosomal protein eS10 family.

The protein localises to the cytoplasm. The chain is Small ribosomal subunit protein eS10z (RPS10A) from Arabidopsis thaliana (Mouse-ear cress).